The sequence spans 429 residues: Argininosuccinate lyase (429 aa).

This sequence belongs to the lyase 1 family. Argininosuccinate lyase subfamily.

It is found in the cytoplasm. It carries out the reaction 2-(N(omega)-L-arginino)succinate = fumarate + L-arginine. It functions in the pathway amino-acid biosynthesis; L-arginine biosynthesis; L-arginine from L-ornithine and carbamoyl phosphate: step 3/3. This is Argininosuccinate lyase from Pyrobaculum aerophilum (strain ATCC 51768 / DSM 7523 / JCM 9630 / CIP 104966 / NBRC 100827 / IM2).